A 718-amino-acid polypeptide reads, in one-letter code: Polyribonucleotide nucleotidyltransferase (718 aa).

Positions 506 and 512 each coordinate Mg(2+). The KH domain occupies 572–632 (PKLELFSVDP…EQIKAAKDYI (61 aa)). Positions 657-718 (GQEFQGIVKK…NGKISVDLCE (62 aa)) constitute an S1 motif domain.

This sequence belongs to the polyribonucleotide nucleotidyltransferase family. Mg(2+) is required as a cofactor.

The protein localises to the cytoplasm. It catalyses the reaction RNA(n+1) + phosphate = RNA(n) + a ribonucleoside 5'-diphosphate. In terms of biological role, involved in mRNA degradation. Catalyzes the phosphorolysis of single-stranded polyribonucleotides processively in the 3'- to 5'-direction. The sequence is that of Polyribonucleotide nucleotidyltransferase from Campylobacter jejuni subsp. doylei (strain ATCC BAA-1458 / RM4099 / 269.97).